Here is a 346-residue protein sequence, read N- to C-terminus: Sesquiterpene synthase Agr1 (346 aa).

Mg(2+)-binding residues include Asp-98, Asn-234, Ser-238, and Glu-242. Residues 98–102 (DNLSD) carry the DDXXD motif motif. Residues Arg-322 and Tyr-323 each contribute to the (2E,6E)-farnesyl diphosphate site.

This sequence belongs to the terpene synthase family. Mg(2+) is required as a cofactor.

It catalyses the reaction (2E,6E)-farnesyl diphosphate = delta-cadinene + diphosphate. The enzyme catalyses (2E,6E)-farnesyl diphosphate = alpha-muurolene + diphosphate. It carries out the reaction (2E,6E)-farnesyl diphosphate = gamma-muurolene + diphosphate. The catalysed reaction is (2E,6E)-farnesyl diphosphate = alpha-selinene + diphosphate. Functionally, terpene cyclase that catalyzes the cyclization of farnesyl diphosphate (FPP) to various sesquiterpenes, including alpha-muurolene, gamma-muurolene, alpha-selinene, beta-selinene, delta-cadinene, alpha-cadinol and delta-cadinol. Delta-cadinene is the major product of Agr1. This chain is Sesquiterpene synthase Agr1, found in Cyclocybe aegerita (Black poplar mushroom).